We begin with the raw amino-acid sequence, 482 residues long: Cobyric acid synthase (482 aa).

Residues 249 to 436 (QCKIACLALS…LHGLFTSDDF (188 aa)) enclose the GATase cobBQ-type domain. Cys-331 functions as the Nucleophile in the catalytic mechanism. His-428 is a catalytic residue.

The protein belongs to the CobB/CobQ family. CobQ subfamily.

It participates in cofactor biosynthesis; adenosylcobalamin biosynthesis. Its function is as follows. Catalyzes amidations at positions B, D, E, and G on adenosylcobyrinic A,C-diamide. NH(2) groups are provided by glutamine, and one molecule of ATP is hydrogenolyzed for each amidation. This Bradyrhizobium diazoefficiens (strain JCM 10833 / BCRC 13528 / IAM 13628 / NBRC 14792 / USDA 110) protein is Cobyric acid synthase.